Consider the following 332-residue polypeptide: Fructose-1,6-bisphosphatase class 1 (332 aa).

4 residues coordinate Mg(2+): glutamate 93, aspartate 113, leucine 115, and aspartate 116. Substrate is bound by residues 116–119 (DGSS), asparagine 209, tyrosine 235, and lysine 272. Residue glutamate 278 coordinates Mg(2+).

This sequence belongs to the FBPase class 1 family. Homotetramer. Requires Mg(2+) as cofactor.

It is found in the cytoplasm. The enzyme catalyses beta-D-fructose 1,6-bisphosphate + H2O = beta-D-fructose 6-phosphate + phosphate. Its pathway is carbohydrate biosynthesis; gluconeogenesis. The sequence is that of Fructose-1,6-bisphosphatase class 1 from Syntrophus aciditrophicus (strain SB).